The chain runs to 217 residues: Cytidylate kinase (217 aa).

Residue 10 to 18 (GPAGAGKST) participates in ATP binding.

This sequence belongs to the cytidylate kinase family. Type 1 subfamily.

Its subcellular location is the cytoplasm. It catalyses the reaction CMP + ATP = CDP + ADP. It carries out the reaction dCMP + ATP = dCDP + ADP. The sequence is that of Cytidylate kinase from Clostridium botulinum (strain ATCC 19397 / Type A).